Reading from the N-terminus, the 329-residue chain is Ketol-acid reductoisomerase (NADP(+)) (329 aa).

The 181-residue stretch at 2 to 182 (ARMYYEKDVD…GATRAGVLET (181 aa)) folds into the KARI N-terminal Rossmann domain. NADP(+) is bound by residues 25-28 (YGSQ), Ser-51, Ser-53, and 83-86 (DEKQ). His-108 is an active-site residue. Position 134 (Gly-134) interacts with NADP(+). The KARI C-terminal knotted domain occupies 183-328 (TFKEETETDL…RNLRSMMSFL (146 aa)). Mg(2+) contacts are provided by Asp-191, Glu-195, Glu-227, and Glu-231. Ser-252 serves as a coordination point for substrate.

The protein belongs to the ketol-acid reductoisomerase family. Mg(2+) is required as a cofactor.

The catalysed reaction is (2R)-2,3-dihydroxy-3-methylbutanoate + NADP(+) = (2S)-2-acetolactate + NADPH + H(+). The enzyme catalyses (2R,3R)-2,3-dihydroxy-3-methylpentanoate + NADP(+) = (S)-2-ethyl-2-hydroxy-3-oxobutanoate + NADPH + H(+). It participates in amino-acid biosynthesis; L-isoleucine biosynthesis; L-isoleucine from 2-oxobutanoate: step 2/4. It functions in the pathway amino-acid biosynthesis; L-valine biosynthesis; L-valine from pyruvate: step 2/4. In terms of biological role, involved in the biosynthesis of branched-chain amino acids (BCAA). Catalyzes an alkyl-migration followed by a ketol-acid reduction of (S)-2-acetolactate (S2AL) to yield (R)-2,3-dihydroxy-isovalerate. In the isomerase reaction, S2AL is rearranged via a Mg-dependent methyl migration to produce 3-hydroxy-3-methyl-2-ketobutyrate (HMKB). In the reductase reaction, this 2-ketoacid undergoes a metal-dependent reduction by NADPH to yield (R)-2,3-dihydroxy-isovalerate. The protein is Ketol-acid reductoisomerase (NADP(+)) of Clostridioides difficile (strain 630) (Peptoclostridium difficile).